The primary structure comprises 611 residues: Beta-hexosaminidase (611 aa).

It belongs to the glycosyl hydrolase 20 family. As to quaternary structure, homodimer.

Its subcellular location is the periplasm. The catalysed reaction is Hydrolysis of terminal non-reducing N-acetyl-D-hexosamine residues in N-acetyl-beta-D-hexosaminides.. The protein operates within glycan degradation; chitin degradation. With respect to regulation, inhibited by mercuric ions, PNP-beta-Glc, PNP-beta-Gal, PNP-alpha-GlcNAc, and PNP-beta-S-GlcNAc. Hydrolyzes aryl-N-acetyl-beta-D-glucosaminide (aryl-beta-GlcNAc), aryl-beta-GalNAc and chitin oligosaccharides. Can hydrolyze rapidly the artificial substrates p-nitrophenyl-N-acetyl-beta-D-glucosaminide (PNP-beta-GlcNAc) and 4-methylumbelliferyl-beta-GlcNAc, and is slightly active on p-nitrophenyl-beta-GalNAc. This enzyme is not processive, i.e. when it hydrolyzes (GlcNAc)n, both products, (Glc-NAc)n-1 and the terminal GlcNAc, are released before the enzyme attacks a second molecule of (GlcNAc)n or (GlcNAc)n-1. The sequence is that of Beta-hexosaminidase from Vibrio furnissii.